A 527-amino-acid polypeptide reads, in one-letter code: Plant-specific TFIIB-related protein PTF2 (527 aa).

The segment at 1-30 (MRCKRCNGSNFERDEDTGNSYCGGCGTLRE) adopts a TFIIB-type zinc-finger fold.

As to quaternary structure, can form homodimer. Interacts with TBP2. Expressed in shoot apical meristems, root tips, primordia of lateral roots, inflorescences, developing pollen grains and embryos.

The protein localises to the nucleus. Its function is as follows. Plant-specific TFIIB-related protein that plays important roles in pollen germination and embryogenesis, possibly by regulating gene expression through interaction with TBP2 and the subunits of RNA polymerases. Binds double-stranded DNA in vitro. This chain is Plant-specific TFIIB-related protein PTF2, found in Arabidopsis thaliana (Mouse-ear cress).